We begin with the raw amino-acid sequence, 267 residues long: Outer membrane protein assembly factor BamD (267 aa).

A signal peptide spans 1–16; that stretch reads MKKILLTVSLGLALSA. Residue Cys-17 is the site of N-palmitoyl cysteine attachment. A lipid anchor (S-diacylglycerol cysteine) is attached at Cys-17.

Belongs to the BamD family. As to quaternary structure, part of the Bam complex.

It is found in the cell outer membrane. Its function is as follows. Part of the outer membrane protein assembly complex, which is involved in assembly and insertion of beta-barrel proteins into the outer membrane. Required for efficient transformation of Neisseria gonorrhoeae by species-related DNA. This chain is Outer membrane protein assembly factor BamD, found in Neisseria gonorrhoeae.